Consider the following 364-residue polypeptide: DNA polymerase IV (364 aa).

Residues 14–198 (IIHIDMDAFF…LPVEKFHGVG (185 aa)) form the UmuC domain. Residues aspartate 18 and aspartate 116 each contribute to the Mg(2+) site. Glutamate 117 is a catalytic residue.

This sequence belongs to the DNA polymerase type-Y family. Monomer. Requires Mg(2+) as cofactor.

The protein resides in the cytoplasm. The catalysed reaction is DNA(n) + a 2'-deoxyribonucleoside 5'-triphosphate = DNA(n+1) + diphosphate. In terms of biological role, poorly processive, error-prone DNA polymerase involved in untargeted mutagenesis. Copies undamaged DNA at stalled replication forks, which arise in vivo from mismatched or misaligned primer ends. These misaligned primers can be extended by PolIV. Exhibits no 3'-5' exonuclease (proofreading) activity. May be involved in translesional synthesis, in conjunction with the beta clamp from PolIII. The protein is DNA polymerase IV of Lactococcus lactis subsp. cremoris (strain MG1363).